Reading from the N-terminus, the 221-residue chain is Probable nicotinate-nucleotide adenylyltransferase (221 aa).

It belongs to the NadD family.

The enzyme catalyses nicotinate beta-D-ribonucleotide + ATP + H(+) = deamido-NAD(+) + diphosphate. Its pathway is cofactor biosynthesis; NAD(+) biosynthesis; deamido-NAD(+) from nicotinate D-ribonucleotide: step 1/1. In terms of biological role, catalyzes the reversible adenylation of nicotinate mononucleotide (NaMN) to nicotinic acid adenine dinucleotide (NaAD). The polypeptide is Probable nicotinate-nucleotide adenylyltransferase (Marinomonas sp. (strain MWYL1)).